Here is a 338-residue protein sequence, read N- to C-terminus: Glycerol-3-phosphate dehydrogenase [NAD(P)+] (338 aa).

NADPH contacts are provided by serine 12, tryptophan 13, and lysine 110. Lysine 110, glycine 141, and serine 143 together coordinate sn-glycerol 3-phosphate. Alanine 145 is a binding site for NADPH. Sn-glycerol 3-phosphate contacts are provided by lysine 196, aspartate 249, serine 259, arginine 260, and asparagine 261. The active-site Proton acceptor is the lysine 196. Arginine 260 lines the NADPH pocket. Valine 284 and glutamate 286 together coordinate NADPH.

This sequence belongs to the NAD-dependent glycerol-3-phosphate dehydrogenase family.

The protein resides in the cytoplasm. It carries out the reaction sn-glycerol 3-phosphate + NAD(+) = dihydroxyacetone phosphate + NADH + H(+). The catalysed reaction is sn-glycerol 3-phosphate + NADP(+) = dihydroxyacetone phosphate + NADPH + H(+). Its pathway is membrane lipid metabolism; glycerophospholipid metabolism. Its function is as follows. Catalyzes the reduction of the glycolytic intermediate dihydroxyacetone phosphate (DHAP) to sn-glycerol 3-phosphate (G3P), the key precursor for phospholipid synthesis. In Pediococcus pentosaceus (strain ATCC 25745 / CCUG 21536 / LMG 10740 / 183-1w), this protein is Glycerol-3-phosphate dehydrogenase [NAD(P)+].